The chain runs to 253 residues: Triosephosphate isomerase (253 aa).

A substrate-binding site is contributed by 9-11 (NWK). The Electrophile role is filled by histidine 95. Glutamate 167 serves as the catalytic Proton acceptor. Residues glycine 173, serine 213, and 234 to 235 (GG) contribute to the substrate site. Serine 213 bears the Phosphoserine mark.

This sequence belongs to the triosephosphate isomerase family. As to quaternary structure, homodimer.

The protein localises to the cytoplasm. It catalyses the reaction D-glyceraldehyde 3-phosphate = dihydroxyacetone phosphate. It functions in the pathway carbohydrate biosynthesis; gluconeogenesis. The protein operates within carbohydrate degradation; glycolysis; D-glyceraldehyde 3-phosphate from glycerone phosphate: step 1/1. Its function is as follows. Involved in the gluconeogenesis. Catalyzes stereospecifically the conversion of dihydroxyacetone phosphate (DHAP) to D-glyceraldehyde-3-phosphate (G3P). The polypeptide is Triosephosphate isomerase (Geobacillus thermodenitrificans (strain NG80-2)).